A 70-amino-acid polypeptide reads, in one-letter code: Large ribosomal subunit protein eL38 (70 aa).

It belongs to the eukaryotic ribosomal protein eL38 family.

This is Large ribosomal subunit protein eL38 (RpL38) from Spodoptera frugiperda (Fall armyworm).